We begin with the raw amino-acid sequence, 145 residues long: Large ribosomal subunit protein mL59 (145 aa).

Residues 123–135 (LKKTSKFKNERQK) show a composition bias toward basic and acidic residues. Positions 123-145 (LKKTSKFKNERQKASKIAKPSPF) are disordered.

The protein belongs to the mitochondrion-specific ribosomal protein mL59 family. In terms of assembly, component of the mitochondrial large ribosomal subunit (mt-LSU). Mature yeast 74S mitochondrial ribosomes consist of a small (37S) and a large (54S) subunit. The 37S small subunit contains a 15S ribosomal RNA (15S mt-rRNA) and at least 32 different proteins. The 54S large subunit contains a 21S rRNA (21S mt-rRNA) and at least 45 different proteins.

Its subcellular location is the mitochondrion. Functionally, component of the mitochondrial ribosome (mitoribosome), a dedicated translation machinery responsible for the synthesis of mitochondrial genome-encoded proteins, including at least some of the essential transmembrane subunits of the mitochondrial respiratory chain. The mitoribosomes are attached to the mitochondrial inner membrane and translation products are cotranslationally integrated into the membrane. This is Large ribosomal subunit protein mL59 (mrpl25) from Schizosaccharomyces pombe (strain 972 / ATCC 24843) (Fission yeast).